The primary structure comprises 103 residues: Small ribosomal subunit protein uS10 (103 aa).

It belongs to the universal ribosomal protein uS10 family. In terms of assembly, part of the 30S ribosomal subunit.

Functionally, involved in the binding of tRNA to the ribosomes. This Bordetella avium (strain 197N) protein is Small ribosomal subunit protein uS10.